Consider the following 258-residue polypeptide: Acetylglutamate kinase (258 aa).

Residues 44–45, arginine 66, and asparagine 158 each bind substrate; that span reads GG. ATP-binding positions include 181–186 and 209–211; these read DVSGIL and IIT.

Belongs to the acetylglutamate kinase family. ArgB subfamily. As to quaternary structure, homodimer.

The protein resides in the cytoplasm. The enzyme catalyses N-acetyl-L-glutamate + ATP = N-acetyl-L-glutamyl 5-phosphate + ADP. Its pathway is amino-acid biosynthesis; L-arginine biosynthesis; N(2)-acetyl-L-ornithine from L-glutamate: step 2/4. Its function is as follows. Catalyzes the ATP-dependent phosphorylation of N-acetyl-L-glutamate. The protein is Acetylglutamate kinase of Salmonella paratyphi A (strain ATCC 9150 / SARB42).